Consider the following 226-residue polypeptide: Protein DVU_0532 (226 aa).

Helical transmembrane passes span 1–23 (MYAF…GLLA), 46–57 (AIGLQGAVQSAL), 73–99 (FFTV…NVIL), 112–131 (MGVA…MIAL), 141–164 (ILTT…GFLA), and 194–222 (LSHI…TRGP).

Heme b is required as a cofactor.

It localises to the cell membrane. In terms of biological role, HMWC (high-molecular-weight cytochrome c), ORF2, ORF3, ORF4, ORF5 and ORF6 in the HMC operon form a transmembrane protein complex that allows electron flow from the periplasmic hydrogenase to the cytoplasmic enzymes that catalyze reduction of sulfates. This is Protein DVU_0532 from Nitratidesulfovibrio vulgaris (strain ATCC 29579 / DSM 644 / CCUG 34227 / NCIMB 8303 / VKM B-1760 / Hildenborough) (Desulfovibrio vulgaris).